The following is a 193-amino-acid chain: dTTP/UTP pyrophosphatase (193 aa).

The Proton acceptor role is filled by aspartate 71.

It belongs to the Maf family. YhdE subfamily. A divalent metal cation is required as a cofactor.

It localises to the cytoplasm. The catalysed reaction is dTTP + H2O = dTMP + diphosphate + H(+). It catalyses the reaction UTP + H2O = UMP + diphosphate + H(+). In terms of biological role, nucleoside triphosphate pyrophosphatase that hydrolyzes dTTP and UTP. May have a dual role in cell division arrest and in preventing the incorporation of modified nucleotides into cellular nucleic acids. The protein is dTTP/UTP pyrophosphatase of Citrifermentans bemidjiense (strain ATCC BAA-1014 / DSM 16622 / JCM 12645 / Bem) (Geobacter bemidjiensis).